We begin with the raw amino-acid sequence, 158 residues long: Ribosome maturation factor RimP (158 aa).

It belongs to the RimP family.

The protein resides in the cytoplasm. Its function is as follows. Required for maturation of 30S ribosomal subunits. This chain is Ribosome maturation factor RimP, found in Streptococcus suis (strain 98HAH33).